A 176-amino-acid polypeptide reads, in one-letter code: Protein KleF (176 aa).

This is Protein KleF (kleF) from Escherichia coli.